Here is a 1032-residue protein sequence, read N- to C-terminus: Suppression of tumorigenicity 18 protein (1032 aa).

3 disordered regions span residues 29 to 76 (RAEE…TNDH), 162 to 213 (GRDK…LTYN), and 325 to 354 (RQPK…AKCP). A compositionally biased stretch (basic residues) spans 40–51 (NKRKSLLMKPRH). The segment covering 52 to 76 (YSPDMDCKENPDNRNEDDGLETNDH) has biased composition (basic and acidic residues). 6 CCHHC-type zinc fingers span residues 344–387 (PRPE…PLEI), 388–431 (LAMH…KLAM), 700–743 (RDLK…LKSL), 744–787 (MAAN…GIKM), 792–835 (EEKE…QKEN), and 845–888 (KLNK…IKKV). Zn(2+) contacts are provided by Cys-353, Cys-358, His-371, Cys-377, Cys-397, Cys-402, His-415, Cys-421, Cys-709, Cys-714, His-727, Cys-733, Cys-753, Cys-758, His-771, Cys-777, Cys-801, Cys-806, His-819, Cys-825, Cys-854, Cys-859, His-872, and Cys-878. The stretch at 905-974 (IEGDEEIRHL…KELAGLSQAL (70 aa)) forms a coiled coil.

Belongs to the MYT1 family. Detected in brain.

It localises to the nucleus. Functionally, repressor that binds to DNA sequences containing a bipartite element consisting of a direct repeat of the sequence 5'-AAAGTTT-3' separated by 2-9 nucleotides. Represses basal transcription activity from target promoters. The polypeptide is Suppression of tumorigenicity 18 protein (St18) (Rattus norvegicus (Rat)).